Consider the following 324-residue polypeptide: IDS-like terpene synthase 1 (324 aa).

Mg(2+) contacts are provided by D77 and D81.

Belongs to the FPP/GGPP synthase family. It depends on Mg(2+) as a cofactor.

The catalysed reaction is (2E)-geranyl diphosphate = (E)-beta-ocimene + diphosphate. It catalyses the reaction (2E)-geranyl diphosphate + H2O = linalool + diphosphate. The enzyme catalyses (2E,6E)-farnesyl diphosphate = (3E,6E)-alpha-farnesene + diphosphate. It carries out the reaction (2E,6E,10E)-geranylgeranyl diphosphate = (E,E,E)-alpha-springene + diphosphate. In terms of biological role, terpene synthase that shows monoterpene synthase activity and produces (E)-beta-ocimene as a major product and linalool as a minor product, using geranyl diphosphate (GPP) as substrate. Also shows sesquiterpene synthase activity as it is able to convert farnesyl diphosphate (FPP) into (E,E)-alpha-farnesene. Finally, TPS1 can convert geranylgeranyl diphosphate into (E,E,E)-alpha-springene. This Melampsora larici-populina (strain 98AG31 / pathotype 3-4-7) (Poplar leaf rust fungus) protein is IDS-like terpene synthase 1.